The chain runs to 210 residues: Regulator of G-protein signaling 17 (210 aa).

A disordered region spans residues 1–21 (MRKRQQSQNEGTSAVSQAPGN). The 117-residue stretch at 84 to 200 (NFDKMMKTPA…LNSQIYKSLV (117 aa)) folds into the RGS domain.

Interacts with GNAI1 and GNAQ. Interacts with GNAZ and GNAI2. Forms a complex with mu-opioid receptors and G(alpha)z/i2 subunits, including GNAZ and GNAI2; the formation of this complex results in mu-opioid receptor desensitization. In terms of processing, N- and O-glycosylated in synapsomal membranes. Post-translationally, serine phosphorylated in synapsomal membranes. Sumoylated with SUMO1 and SUM02 in synaptosomes. The sumoylated forms act as a scaffold for sequestering mu-opioid receptor-activated G(alpha) subunits.

It localises to the membrane. The protein resides in the synapse. The protein localises to the synaptosome. Its subcellular location is the nucleus. It is found in the cytoplasm. Its function is as follows. Regulates G protein-coupled receptor signaling cascades, including signaling via muscarinic acetylcholine receptor CHRM2 and dopamine receptor DRD2. Inhibits signal transduction by increasing the GTPase activity of G protein alpha subunits, thereby driving them into their inactive GDP-bound form. Binds selectively to GNAZ and GNAI2 subunits, accelerates their GTPase activity and regulates their signaling activities. Negatively regulates mu-opioid receptor-mediated activation of the G-proteins. The sequence is that of Regulator of G-protein signaling 17 (RGS17) from Gallus gallus (Chicken).